The following is a 151-amino-acid chain: D-aminoacyl-tRNA deacylase (151 aa).

The Gly-cisPro motif, important for rejection of L-amino acids motif lies at 138 to 139 (GP).

This sequence belongs to the DTD family. In terms of assembly, homodimer.

The protein resides in the cytoplasm. It catalyses the reaction glycyl-tRNA(Ala) + H2O = tRNA(Ala) + glycine + H(+). The catalysed reaction is a D-aminoacyl-tRNA + H2O = a tRNA + a D-alpha-amino acid + H(+). Functionally, an aminoacyl-tRNA editing enzyme that deacylates mischarged D-aminoacyl-tRNAs. Also deacylates mischarged glycyl-tRNA(Ala), protecting cells against glycine mischarging by AlaRS. Acts via tRNA-based rather than protein-based catalysis; rejects L-amino acids rather than detecting D-amino acids in the active site. By recycling D-aminoacyl-tRNA to D-amino acids and free tRNA molecules, this enzyme counteracts the toxicity associated with the formation of D-aminoacyl-tRNA entities in vivo and helps enforce protein L-homochirality. This is D-aminoacyl-tRNA deacylase from Picosynechococcus sp. (strain ATCC 27264 / PCC 7002 / PR-6) (Agmenellum quadruplicatum).